The chain runs to 304 residues: Bifunctional protein FolD (304 aa).

Residues 170–172 (GRS), serine 195, and isoleucine 236 contribute to the NADP(+) site.

Belongs to the tetrahydrofolate dehydrogenase/cyclohydrolase family. In terms of assembly, homodimer.

The enzyme catalyses (6R)-5,10-methylene-5,6,7,8-tetrahydrofolate + NADP(+) = (6R)-5,10-methenyltetrahydrofolate + NADPH. The catalysed reaction is (6R)-5,10-methenyltetrahydrofolate + H2O = (6R)-10-formyltetrahydrofolate + H(+). It participates in one-carbon metabolism; tetrahydrofolate interconversion. Catalyzes the oxidation of 5,10-methylenetetrahydrofolate to 5,10-methenyltetrahydrofolate and then the hydrolysis of 5,10-methenyltetrahydrofolate to 10-formyltetrahydrofolate. In Anaplasma phagocytophilum (strain HZ), this protein is Bifunctional protein FolD.